The primary structure comprises 222 residues: 7-cyano-7-deazaguanine synthase (222 aa).

8-18 (LSGGMDSTTAA) lines the ATP pocket. C187, C195, C198, and C201 together coordinate Zn(2+).

The protein belongs to the QueC family. Zn(2+) serves as cofactor.

The catalysed reaction is 7-carboxy-7-deazaguanine + NH4(+) + ATP = 7-cyano-7-deazaguanine + ADP + phosphate + H2O + H(+). It participates in purine metabolism; 7-cyano-7-deazaguanine biosynthesis. Catalyzes the ATP-dependent conversion of 7-carboxy-7-deazaguanine (CDG) to 7-cyano-7-deazaguanine (preQ(0)). The protein is 7-cyano-7-deazaguanine synthase of Nautilia profundicola (strain ATCC BAA-1463 / DSM 18972 / AmH).